Here is a 214-residue protein sequence, read N- to C-terminus: MGQKVNPISFRLVRTRDWRSKWFANKKEFGDLLVEDQIIRAYLLKKPALVGVSAIKIKRMSGKVEVTIVTARPGLVIGKKGAEIDVLKGELSKLTGKEVWVAVEEVKRPDMDAKIVADSIAKQLERRIPFRRAMKKAMQSSIDAGAFGIKVQLSGRIGGAEIARTEWYKEGSTPLHTLRADIDYATGRAETTYGSIGVKVWIYRGEDNLAKKEA.

The KH type-2 domain occupies 39–107 (IRAYLLKKPA…EVWVAVEEVK (69 aa)).

The protein belongs to the universal ribosomal protein uS3 family. Part of the 30S ribosomal subunit. Forms a tight complex with proteins S10 and S14.

Binds the lower part of the 30S subunit head. Binds mRNA in the 70S ribosome, positioning it for translation. The protein is Small ribosomal subunit protein uS3 of Protochlamydia amoebophila (strain UWE25).